The chain runs to 286 residues: Putative cyclin-H (286 aa).

Residues 79–148 (AIIYIKRFYL…ILESLNFNLI (70 aa)) enclose the Cyclin N-terminal domain. Residues 235-286 (NNNNNNNNNNNNNNNNNNNNNNNNNNNNNNNNNNNNNNNNNNNNNNNNNLLL) are disordered.

This sequence belongs to the cyclin family. Cyclin C subfamily.

It localises to the nucleus. In terms of biological role, may regulate cdk7 involved in transcription regulation and cell cycle progression. This is Putative cyclin-H (cycH) from Dictyostelium discoideum (Social amoeba).